We begin with the raw amino-acid sequence, 1305 residues long: Contactin-associated protein-like 5 (1305 aa).

Positions Met1 to Ser24 are cleaved as a signal peptide. The Extracellular portion of the chain corresponds to Ala25–Ser1236. Residues Cys30–Cys174 enclose the F5/8 type C domain. An intrachain disulfide couples Cys30 to Cys174. Laminin G-like domains are found at residues Val180–Cys360 and Pro367–Cys544. Asn282, Asn355, and Asn496 each carry an N-linked (GlcNAc...) asparagine glycan. Cys329 and Cys360 are joined by a disulfide. 4 disulfides stabilise this stretch: Cys512-Cys544, Cys550-Cys561, Cys555-Cys570, and Cys572-Cys582. The EGF-like 1 domain maps to Ile546 to His583. The Fibrinogen C-terminal domain maps to Asn584–Trp790. A glycan (N-linked (GlcNAc...) asparagine) is linked at Asn622. Residues Asn791–Cys956 enclose the Laminin G-like 3 domain. 5 disulfide bridges follow: Cys929/Cys956, Cys960/Cys973, Cys967/Cys982, Cys984/Cys994, and Cys1163/Cys1198. One can recognise an EGF-like 2 domain in the interval Pro957–Lys995. In terms of domain architecture, Laminin G-like 4 spans Ala1000–Cys1198. The chain crosses the membrane as a helical span at residues Ala1237–Met1257. The Cytoplasmic segment spans residues Thr1258 to Ile1305.

It belongs to the neurexin family.

Its subcellular location is the membrane. In terms of biological role, may play a role in the correct development and proper functioning of the peripheral and central nervous system and be involved in cell adhesion and intercellular communication. This is Contactin-associated protein-like 5 (CNTNAP5) from Canis lupus familiaris (Dog).